Reading from the N-terminus, the 185-residue chain is Small ribosomal subunit protein uS4c (185 aa).

In terms of domain architecture, S4 RNA-binding spans 72–134 (MRLDNVIFRL…PTSCNALKGE (63 aa)). The tract at residues 132 to 154 (KGESPGGGETPDHLTASLSEGSR) is disordered.

Belongs to the universal ribosomal protein uS4 family. In terms of assembly, part of the 30S ribosomal subunit. Contacts protein S5. The interaction surface between S4 and S5 is involved in control of translational fidelity.

It is found in the plastid. The protein localises to the chloroplast. In terms of biological role, one of the primary rRNA binding proteins, it binds directly to 16S rRNA where it nucleates assembly of the body of the 30S subunit. Its function is as follows. With S5 and S12 plays an important role in translational accuracy. The polypeptide is Small ribosomal subunit protein uS4c (rps4) (Woodwardia radicans (Rooting chainfern)).